A 311-amino-acid chain; its full sequence is Aspartate carbamoyltransferase catalytic subunit (311 aa).

Positions 55 and 56 each coordinate carbamoyl phosphate. Residue lysine 85 participates in L-aspartate binding. Residues arginine 106, histidine 135, and glutamine 138 each coordinate carbamoyl phosphate. 2 residues coordinate L-aspartate: arginine 168 and arginine 230. Residues leucine 268 and proline 269 each contribute to the carbamoyl phosphate site.

The protein belongs to the aspartate/ornithine carbamoyltransferase superfamily. ATCase family. Heterododecamer (2C3:3R2) of six catalytic PyrB chains organized as two trimers (C3), and six regulatory PyrI chains organized as three dimers (R2).

The catalysed reaction is carbamoyl phosphate + L-aspartate = N-carbamoyl-L-aspartate + phosphate + H(+). Its pathway is pyrimidine metabolism; UMP biosynthesis via de novo pathway; (S)-dihydroorotate from bicarbonate: step 2/3. In terms of biological role, catalyzes the condensation of carbamoyl phosphate and aspartate to form carbamoyl aspartate and inorganic phosphate, the committed step in the de novo pyrimidine nucleotide biosynthesis pathway. This chain is Aspartate carbamoyltransferase catalytic subunit, found in Escherichia coli O139:H28 (strain E24377A / ETEC).